The following is a 140-amino-acid chain: Probable disulfide formation protein C 2 (140 aa).

Residues K6–I25 traverse the membrane as a helical segment. A disulfide bridge connects residues C35 and C38. Transmembrane regions (helical) follow at residues Y40 to K59 and Y66 to T83. A disulfide bridge connects residues C95 and C101. The helical transmembrane segment at G110–I134 threads the bilayer.

This sequence belongs to the DsbB family. BdbC subfamily.

It localises to the cell membrane. Required for disulfide bond formation in some proteins. This Bacillus anthracis protein is Probable disulfide formation protein C 2 (bdbC2).